The primary structure comprises 516 residues: Protein DML1 (516 aa).

It belongs to the misato family.

It localises to the mitochondrion. Its function is as follows. Involved in the partitioning of the mitochondrial organelle and mitochondrial DNA (mtDNA) inheritance. This Coccidioides immitis (strain RS) (Valley fever fungus) protein is Protein DML1 (DML1).